A 336-amino-acid chain; its full sequence is Ferredoxin--NADP reductase 1 (336 aa).

Residues Glu37, Lys45, Phe50, Val90, Leu125, Asp287, and Thr328 each coordinate FAD.

This sequence belongs to the ferredoxin--NADP reductase type 2 family. As to quaternary structure, homodimer. FAD serves as cofactor.

It carries out the reaction 2 reduced [2Fe-2S]-[ferredoxin] + NADP(+) + H(+) = 2 oxidized [2Fe-2S]-[ferredoxin] + NADPH. In Bacillus subtilis (strain 168), this protein is Ferredoxin--NADP reductase 1 (ycgT).